The chain runs to 519 residues: 3-octaprenyl-4-hydroxybenzoate carboxy-lyase (519 aa).

A Mn(2+)-binding site is contributed by N177. Prenylated FMN contacts are provided by residues 180–182, 194–196, and 199–200; these read IYR, RWL, and RG. E243 is a binding site for Mn(2+). The active-site Proton donor is D318.

Belongs to the UbiD family. In terms of assembly, homohexamer. Requires prenylated FMN as cofactor. The cofactor is Mn(2+).

Its subcellular location is the cell membrane. It catalyses the reaction a 4-hydroxy-3-(all-trans-polyprenyl)benzoate + H(+) = a 2-(all-trans-polyprenyl)phenol + CO2. The protein operates within cofactor biosynthesis; ubiquinone biosynthesis. Functionally, catalyzes the decarboxylation of 3-octaprenyl-4-hydroxy benzoate to 2-octaprenylphenol, an intermediate step in ubiquinone biosynthesis. This chain is 3-octaprenyl-4-hydroxybenzoate carboxy-lyase, found in Burkholderia thailandensis (strain ATCC 700388 / DSM 13276 / CCUG 48851 / CIP 106301 / E264).